Here is a 224-residue protein sequence, read N- to C-terminus: uncharacterized protein (224 aa).

Asparagine 10, asparagine 70, and asparagine 74 each carry an N-linked (GlcNAc...) asparagine glycan.

It localises to the endoplasmic reticulum. This is an uncharacterized protein from Saccharomyces cerevisiae (strain ATCC 204508 / S288c) (Baker's yeast).